Consider the following 281-residue polypeptide: Nicotinamide/nicotinic acid mononucleotide adenylyltransferase 1 (281 aa).

Residues Gly-15 and Ser-16 each contribute to the beta-nicotinamide D-ribonucleotide site. 4 residues coordinate NAD(+): Gly-15, Ser-16, Phe-17, and Met-23. Residue 15 to 17 (GSF) participates in ATP binding. Position 24 (His-24) interacts with ATP. Residues Tyr-55 and Lys-57 each coordinate beta-nicotinamide D-ribonucleotide. Lys-57 is a binding site for NAD(+). Lys-58 contacts ATP. Beta-nicotinamide D-ribonucleotide is bound by residues Trp-92 and Thr-95. NAD(+) contacts are provided by Trp-92 and Thr-95. Positions 113–143 (PQQNSPVLEKPGRKRKWAEQKQDISEKKSLE) are disordered. At Ser-117 the chain carries Phosphoserine. A Nuclear localization signal motif is present at residues 123–129 (PGRKRKW). A compositionally biased stretch (basic and acidic residues) spans 129–143 (WAEQKQDISEKKSLE). 6 residues coordinate NAD(+): Gly-158, Asp-160, Leu-170, Trp-171, Glu-217, and Asn-221. Position 158–160 (158–160 (GAD)) interacts with ATP. The beta-nicotinamide D-ribonucleotide site is built by Leu-170 and Trp-171. 226–229 (TKIR) contacts ATP.

This sequence belongs to the eukaryotic NMN adenylyltransferase family. Homohexamer. Interacts with ADPRT/PARP1. The cofactor is Zn(2+). It depends on Mg(2+) as a cofactor.

The protein resides in the nucleus. It catalyses the reaction beta-nicotinamide D-ribonucleotide + ATP + H(+) = diphosphate + NAD(+). The catalysed reaction is nicotinate beta-D-ribonucleotide + ATP + H(+) = deamido-NAD(+) + diphosphate. It participates in cofactor biosynthesis; NAD(+) biosynthesis; NAD(+) from nicotinamide D-ribonucleotide: step 1/1. Its pathway is cofactor biosynthesis; NAD(+) biosynthesis; deamido-NAD(+) from nicotinate D-ribonucleotide: step 1/1. Activity is strongly inhibited by galotannin. Inhibited by P1-(adenosine-5')-P4-(nicotinic-acid-riboside-5')-tetraphosphate (Nap4AD). In terms of biological role, catalyzes the formation of NAD(+) from nicotinamide mononucleotide (NMN) and ATP. Can also use the deamidated form; nicotinic acid mononucleotide (NaMN) as substrate with the same efficiency. Can use triazofurin monophosphate (TrMP) as substrate. Also catalyzes the reverse reaction, i.e. the pyrophosphorolytic cleavage of NAD(+). For the pyrophosphorolytic activity, prefers NAD(+) and NaAD as substrates and degrades NADH, nicotinic acid adenine dinucleotide phosphate (NHD) and nicotinamide guanine dinucleotide (NGD) less effectively. Involved in the synthesis of ATP in the nucleus, together with PARP1, PARG and NUDT5. Nuclear ATP generation is required for extensive chromatin remodeling events that are energy-consuming. Fails to cleave phosphorylated dinucleotides NADP(+), NADPH and NaADP(+). Also acts as a cofactor for glutamate and aspartate ADP-ribosylation by directing PARP1 catalytic activity to glutamate and aspartate residues on histones. Protects against axonal degeneration following mechanical or toxic insults. Delays axonal degeneration after axotomy. Results in a &gt;10-fold increase in intact neurites 72 hours after injury. Neural protection does not correlate with cellular NAD(+) levels but may still require enzyme activity. The polypeptide is Nicotinamide/nicotinic acid mononucleotide adenylyltransferase 1 (NMNAT1) (Bos taurus (Bovine)).